A 142-amino-acid chain; its full sequence is Coactosin-like protein (142 aa).

Residue alanine 2 is modified to N-acetylalanine. One can recognise an ADF-H domain in the interval 2-130 (ATKIDKEACR…EEDFIRSELK (129 aa)). The residue at position 23 (serine 23) is a Phosphoserine. The interval 66–75 (TGDAMSKRSK) is flexible and important for F-actin binding. Position 102 is an N6-acetyllysine (lysine 102). A Phosphoserine modification is found at serine 141.

The protein belongs to the actin-binding proteins ADF family. Coactosin subfamily. In terms of assembly, interacts with 5-lipoxygenase (ALOX5/5LO) in a calcium-independent manner. Binds to F-actin with a stoichiometry of 1:2.

It localises to the cytoplasm. The protein localises to the cytoskeleton. Its subcellular location is the nucleus. Binds to F-actin in a calcium-independent manner. Has no direct effect on actin depolymerization. Acts as a chaperone for ALOX5 (5LO), influencing both its stability and activity in leukotrienes synthesis. In Rattus norvegicus (Rat), this protein is Coactosin-like protein.